The following is a 282-amino-acid chain: D-alanine aminotransferase (282 aa).

Tyrosine 32 is a substrate binding site. Position 51 (arginine 51) interacts with pyridoxal 5'-phosphate. Arginine 99 and histidine 101 together coordinate substrate. Catalysis depends on lysine 146, which acts as the Proton acceptor. The residue at position 146 (lysine 146) is an N6-(pyridoxal phosphate)lysine. Pyridoxal 5'-phosphate is bound at residue glutamate 178.

Belongs to the class-IV pyridoxal-phosphate-dependent aminotransferase family. Homodimer. It depends on pyridoxal 5'-phosphate as a cofactor.

The enzyme catalyses D-alanine + 2-oxoglutarate = D-glutamate + pyruvate. Functionally, acts on the D-isomers of alanine, leucine, aspartate, glutamate, aminobutyrate, norvaline and asparagine. The enzyme transfers an amino group from a substrate D-amino acid to the pyridoxal phosphate cofactor to form pyridoxamine and an alpha-keto acid in the first half-reaction. The second half-reaction is the reverse of the first, transferring the amino group from the pyridoxamine to a second alpha-keto acid to form the product D-amino acid via a ping-pong mechanism. This is an important process in the formation of D-alanine and D-glutamate, which are essential bacterial cell wall components. The sequence is that of D-alanine aminotransferase (dat) from Staphylococcus epidermidis (strain ATCC 35984 / DSM 28319 / BCRC 17069 / CCUG 31568 / BM 3577 / RP62A).